A 474-amino-acid polypeptide reads, in one-letter code: uncharacterized protein (474 aa).

A compositionally biased stretch (polar residues) spans 1-14 (MGSRYPSHQLSNGL). Residues 1–137 (MGSRYPSHQL…QSGGVTRQNS (137 aa)) form a disordered region. S45 is modified (phosphoserine). Composition is skewed to polar residues over residues 73 to 83 (RSGSFAGTAQS), 97 to 113 (SLAS…NSGP), and 125 to 137 (SGPQ…RQNS). S169 carries the phosphoserine modification. The next 2 helical transmembrane spans lie at 210–230 (VLWL…FILG) and 236–256 (ILLV…IWNI).

Its subcellular location is the membrane. This is an uncharacterized protein from Arabidopsis thaliana (Mouse-ear cress).